Here is a 194-residue protein sequence, read N- to C-terminus: Probable proteasome subunit beta type-4 (194 aa).

This sequence belongs to the peptidase T1B family. In terms of assembly, the 26S proteasome consists of a 20S proteasome core and two 19S regulatory subunits. The 20S proteasome core is composed of 28 subunits that are arranged in four stacked rings, resulting in a barrel-shaped structure. The two end rings are each formed by seven alpha subunits, and the two central rings are each formed by seven beta subunits. The catalytic chamber with the active sites is on the inside of the barrel.

It localises to the cytoplasm. Its subcellular location is the nucleus. Functionally, non-catalytic component of the proteasome, a multicatalytic proteinase complex which is characterized by its ability to cleave peptides with Arg, Phe, Tyr, Leu, and Glu adjacent to the leaving group at neutral or slightly basic pH. The proteasome has an ATP-dependent proteolytic activity. The chain is Probable proteasome subunit beta type-4 (PRO2) from Meyerozyma guilliermondii (strain ATCC 6260 / CBS 566 / DSM 6381 / JCM 1539 / NBRC 10279 / NRRL Y-324) (Yeast).